The chain runs to 202 residues: Nucleoid occlusion factor SlmA (202 aa).

The HTH tetR-type domain maps to 14-75 (KERQQQVLEV…ALIERIEQTL (62 aa)). A DNA-binding region (H-T-H motif) is located at residues 38–57 (TTERLAKAVGVSEGALYRYF).

The protein belongs to the nucleoid occlusion factor SlmA family. As to quaternary structure, homodimer. Interacts with FtsZ.

It is found in the cytoplasm. It localises to the nucleoid. In terms of biological role, required for nucleoid occlusion (NO) phenomenon, which prevents Z-ring formation and cell division over the nucleoid. Acts as a DNA-associated cell division inhibitor that binds simultaneously chromosomal DNA and FtsZ, and disrupts the assembly of FtsZ polymers. SlmA-DNA-binding sequences (SBS) are dispersed on non-Ter regions of the chromosome, preventing FtsZ polymerization at these regions. In Actinobacillus pleuropneumoniae serotype 5b (strain L20), this protein is Nucleoid occlusion factor SlmA.